We begin with the raw amino-acid sequence, 354 residues long: Hyaluronan and proteoglycan link protein 1 (354 aa).

Positions 1–9 (MRSLLFLVL) are excised as a propeptide. An Ig-like V-type domain is found at 38 to 152 (PRLLVEAEQA…EGLEDDTAVV (115 aa)). The N-linked (GlcNAc...) asparagine glycan is linked to Asn56. 5 cysteine pairs are disulfide-bonded: Cys61–Cys139, Cys181–Cys252, Cys205–Cys226, Cys279–Cys349, and Cys304–Cys325. 2 consecutive Link domains span residues 159 to 254 (VVFP…FCFT) and 259 to 351 (GRFY…YCFR).

Belongs to the HAPLN family.

It is found in the secreted. The protein resides in the extracellular space. It localises to the extracellular matrix. In terms of biological role, stabilizes the aggregates of proteoglycan monomers with hyaluronic acid in the extracellular cartilage matrix. In Rattus norvegicus (Rat), this protein is Hyaluronan and proteoglycan link protein 1 (Hapln1).